The sequence spans 230 residues: Ribosomal RNA large subunit methyltransferase E (230 aa).

A compositionally biased stretch (gly residues) spans 1–13; sequence MSGSGGKGGGRGG. The disordered stretch occupies residues 1-22; sequence MSGSGGKGGGRGGLHVRVKTAK. The S-adenosyl-L-methionine site is built by glycine 81, tryptophan 83, aspartate 100, aspartate 116, and aspartate 140. The active-site Proton acceptor is lysine 180.

The protein belongs to the class I-like SAM-binding methyltransferase superfamily. RNA methyltransferase RlmE family.

It localises to the cytoplasm. It catalyses the reaction uridine(2552) in 23S rRNA + S-adenosyl-L-methionine = 2'-O-methyluridine(2552) in 23S rRNA + S-adenosyl-L-homocysteine + H(+). In terms of biological role, specifically methylates the uridine in position 2552 of 23S rRNA at the 2'-O position of the ribose in the fully assembled 50S ribosomal subunit. The protein is Ribosomal RNA large subunit methyltransferase E of Sphingopyxis alaskensis (strain DSM 13593 / LMG 18877 / RB2256) (Sphingomonas alaskensis).